The chain runs to 21 residues: Peptidyl-prolyl cis-trans isomerase (21 aa).

The tract at residues 1–21 is disordered; sequence ENFKIKHTEPGLLSMANAGKN.

The protein belongs to the cyclophilin-type PPIase family. PPIase A subfamily.

The enzyme catalyses [protein]-peptidylproline (omega=180) = [protein]-peptidylproline (omega=0). In terms of biological role, PPIases accelerate the folding of proteins. It catalyzes the cis-trans isomerization of proline imidic peptide bonds in oligopeptides. The sequence is that of Peptidyl-prolyl cis-trans isomerase from Naegleria fowleri (Brain eating amoeba).